The sequence spans 350 residues: GTPase Obg (350 aa).

In terms of domain architecture, Obg spans 1–159 (MKLVDEAEIE…RTLKLELKLL (159 aa)). The segment at 126 to 147 (GNMHFKSSTNRSPRQALPGEPG) is disordered. Residues 160–337 (ADVGLLGFPN…IMSRIMAFFD (178 aa)) form the OBG-type G domain. Residues 166-173 (GFPNAGKS), 191-195 (FTTLY), 213-216 (DIPG), 287-290 (NKAD), and 318-320 (SAL) each bind GTP. Mg(2+)-binding residues include Ser-173 and Thr-193.

It belongs to the TRAFAC class OBG-HflX-like GTPase superfamily. OBG GTPase family. In terms of assembly, monomer. Requires Mg(2+) as cofactor.

The protein resides in the cytoplasm. Its function is as follows. An essential GTPase which binds GTP, GDP and possibly (p)ppGpp with moderate affinity, with high nucleotide exchange rates and a fairly low GTP hydrolysis rate. Plays a role in control of the cell cycle, stress response, ribosome biogenesis and in those bacteria that undergo differentiation, in morphogenesis control. This Stenotrophomonas maltophilia (strain K279a) protein is GTPase Obg.